The primary structure comprises 299 residues: ATP phosphoribosyltransferase (299 aa).

Belongs to the ATP phosphoribosyltransferase family. Long subfamily. Equilibrium between an active dimeric form, an inactive hexameric form and higher aggregates. Interconversion between the various forms is largely reversible and is influenced by the natural substrates and inhibitors of the enzyme. Mg(2+) is required as a cofactor.

The protein resides in the cytoplasm. It carries out the reaction 1-(5-phospho-beta-D-ribosyl)-ATP + diphosphate = 5-phospho-alpha-D-ribose 1-diphosphate + ATP. It participates in amino-acid biosynthesis; L-histidine biosynthesis; L-histidine from 5-phospho-alpha-D-ribose 1-diphosphate: step 1/9. Its activity is regulated as follows. Feedback inhibited by histidine. Its function is as follows. Catalyzes the condensation of ATP and 5-phosphoribose 1-diphosphate to form N'-(5'-phosphoribosyl)-ATP (PR-ATP). Has a crucial role in the pathway because the rate of histidine biosynthesis seems to be controlled primarily by regulation of HisG enzymatic activity. The polypeptide is ATP phosphoribosyltransferase (Escherichia coli O17:K52:H18 (strain UMN026 / ExPEC)).